A 193-amino-acid chain; its full sequence is Probable nicotinate-nucleotide adenylyltransferase (193 aa).

It belongs to the NadD family.

The catalysed reaction is nicotinate beta-D-ribonucleotide + ATP + H(+) = deamido-NAD(+) + diphosphate. It functions in the pathway cofactor biosynthesis; NAD(+) biosynthesis; deamido-NAD(+) from nicotinate D-ribonucleotide: step 1/1. Catalyzes the reversible adenylation of nicotinate mononucleotide (NaMN) to nicotinic acid adenine dinucleotide (NaAD). The polypeptide is Probable nicotinate-nucleotide adenylyltransferase (Fusobacterium nucleatum subsp. nucleatum (strain ATCC 25586 / DSM 15643 / BCRC 10681 / CIP 101130 / JCM 8532 / KCTC 2640 / LMG 13131 / VPI 4355)).